The sequence spans 454 residues: L-cysteine desulfhydrase-like protein lolT1 (454 aa).

Lys227 carries the N6-(pyridoxal phosphate)lysine modification.

The protein belongs to the class-V pyridoxal-phosphate-dependent aminotransferase family. Requires pyridoxal 5'-phosphate as cofactor.

The protein operates within alkaloid biosynthesis. Functionally, L-cysteine desulfhydrase-like protein; part of the gene cluster that mediates the biosynthesis of loline alkaloids, potent insecticidal agents composed of a pyrrolizidine ring system and an uncommon ether bridge linking carbons 2 and 7. Lolines are structurally differentiated by the various modifications of the L-amino group and include norloline, loline, N-methylloline, N-acetylloline, N-acetylnorloline, and N-formylloline. The first committed step is the condensation of O-acetyl-L-homoserine (derived from L-aspartic acid) and L-proline, probably catalyzed by the gamma-type pyridoxal 5'-phosphate(PLP)-dependent enzyme lolC, to give the diamino diacid, NACPP. Ensuing cyclization, decarboxylation, and acetylation steps yield 1-exo-acetamidopyrrolizidine (AcAP). LolO is required for installation of the ether bridge upon the pathway intermediate, 1-exo-acetamidopyrrolizidine (AcAP). In sequential 2-oxoglutarate- and O(2)-consuming steps, lolO removes hydrogens from C2 and C7 of AcAP to form both carbon-oxygen bonds in N-acetylnorloline (NANL), the precursor to all other lolines. The enzymes lolD, lolE, lolF and lolT have also been proposed to be involved in the ether-bridge installation. Further processing of the exocyclic moiety of NANL by fungal N-acetamidase (LolN), methyltransferase (LolM), and cytochrome P450 (LolP) enzymes, with occasional involvement of a plant acetyltransferase, generates the other known lolines. LolN transforms NANL to norlonine which is monomethylated and dimethylated to respectively lonine and N-methyllonine (NML) by lolM. LolP catalyzes hydroxylation of the methyl group in N-methylloline (NML) and further oxygenation to N-formylloline (NFL). A plant acetyltransferase is responsible for the acetylation of loline to form N-acetylloline (NAL). LolA might interact with aspartate kinase to prevent feedback inhibition of its activity by these end products and thereby promote production of L-homoserine from L-aspartate. In Epichloe uncinata (Endophyte fungus), this protein is L-cysteine desulfhydrase-like protein lolT1.